A 117-amino-acid polypeptide reads, in one-letter code: Nascent polypeptide-associated complex protein (117 aa).

Positions 9–77 (PKQLKQMQRA…ARECDLEAEV (69 aa)) constitute an NAC-A/B domain.

Belongs to the NAC-alpha family. As to quaternary structure, homodimer. Interacts with the ribosome. Binds ribosomal RNA.

In terms of biological role, contacts the emerging nascent chain on the ribosome. In Methanothermobacter marburgensis (strain ATCC BAA-927 / DSM 2133 / JCM 14651 / NBRC 100331 / OCM 82 / Marburg) (Methanobacterium thermoautotrophicum), this protein is Nascent polypeptide-associated complex protein.